Here is a 25-residue protein sequence, read N- to C-terminus: YIINVPPRCPPGSKFVKNKCRVIVP.

Cysteine 9 and cysteine 20 form a disulfide bridge.

In terms of tissue distribution, expressed by the venom gland.

The protein resides in the secreted. Serine protease inhibitor which exhibits antifibrinolytic, antielastolytic and antimicrobial activities. Displays antimicrobial activity against bacteria and fungi. Likely functions in the innate immune response to microbial infection and possibly in the venom, as an antifibrinolytic agent. The polypeptide is Secapin-1 (Apis mellifera (Honeybee)).